The primary structure comprises 120 residues: Large ribosomal subunit protein bL12 (120 aa).

Belongs to the bacterial ribosomal protein bL12 family. In terms of assembly, homodimer. Part of the ribosomal stalk of the 50S ribosomal subunit. Forms a multimeric L10(L12)X complex, where L10 forms an elongated spine to which 2 to 4 L12 dimers bind in a sequential fashion. Binds GTP-bound translation factors.

Its function is as follows. Forms part of the ribosomal stalk which helps the ribosome interact with GTP-bound translation factors. Is thus essential for accurate translation. This Lactobacillus gasseri (strain ATCC 33323 / DSM 20243 / BCRC 14619 / CIP 102991 / JCM 1131 / KCTC 3163 / NCIMB 11718 / NCTC 13722 / AM63) protein is Large ribosomal subunit protein bL12.